The primary structure comprises 713 residues: uncharacterized protein (713 aa).

Residues 686 to 706 (VWKFNPALYSTITNIFLLIIF) form a helical membrane-spanning segment.

The protein belongs to the plectrovirus ORF1 family.

Its subcellular location is the host membrane. This is an uncharacterized protein from Spiroplasma melliferum (SpV1).